We begin with the raw amino-acid sequence, 309 residues long: Pyrroline-5-carboxylate reductase 1, mitochondrial (309 aa).

The residue at position 2 (serine 2) is an N-acetylserine. Residues 6–11 and serine 34 each bind NADP(+); that span reads IGAGQL. Alanine 8, glutamine 10, leucine 11, serine 34, aspartate 36, asparagine 56, valine 70, lysine 71, and alanine 97 together coordinate NADPH. Residues asparagine 56, 69–72, and 95–97 contribute to the NADP(+) site; these read AVKP and CAA. Glutamate 164 contributes to the L-proline binding site. Asparagine 230 contacts NADPH. Positions 237 and 238 each coordinate L-proline. Phosphoserine is present on residues serine 278 and serine 301.

The protein belongs to the pyrroline-5-carboxylate reductase family. In terms of assembly, homodecamer; composed of 5 homodimers. Interacts with LTO1. Highly expressed in osteoblasts and skin.

Its subcellular location is the mitochondrion. It catalyses the reaction L-proline + NADP(+) = (S)-1-pyrroline-5-carboxylate + NADPH + 2 H(+). The enzyme catalyses L-proline + NAD(+) = (S)-1-pyrroline-5-carboxylate + NADH + 2 H(+). Its pathway is amino-acid biosynthesis; L-proline biosynthesis; L-proline from L-glutamate 5-semialdehyde: step 1/1. Functionally, oxidoreductase that catalyzes the last step in proline biosynthesis, which corresponds to the reduction of pyrroline-5-carboxylate to L-proline using NAD(P)H. At physiologic concentrations, has higher specific activity in the presence of NADH. Involved in the cellular response to oxidative stress. This Mus musculus (Mouse) protein is Pyrroline-5-carboxylate reductase 1, mitochondrial.